The primary structure comprises 204 residues: Large ribosomal subunit protein uL4 (204 aa).

Residues Thr-49–Ser-75 form a disordered region.

The protein belongs to the universal ribosomal protein uL4 family. As to quaternary structure, part of the 50S ribosomal subunit.

Its function is as follows. One of the primary rRNA binding proteins, this protein initially binds near the 5'-end of the 23S rRNA. It is important during the early stages of 50S assembly. It makes multiple contacts with different domains of the 23S rRNA in the assembled 50S subunit and ribosome. Functionally, forms part of the polypeptide exit tunnel. This chain is Large ribosomal subunit protein uL4, found in Campylobacter hominis (strain ATCC BAA-381 / DSM 21671 / CCUG 45161 / LMG 19568 / NCTC 13146 / CH001A).